The sequence spans 484 residues: Malonate-semialdehyde dehydrogenase 1 (484 aa).

NAD(+)-binding residues include Phe-153, Lys-177, Glu-180, Arg-181, Ser-230, and Thr-252. Cys-285 serves as the catalytic Nucleophile. Residue Glu-385 participates in NAD(+) binding.

The protein belongs to the aldehyde dehydrogenase family. IolA subfamily. Homotetramer.

The catalysed reaction is 3-oxopropanoate + NAD(+) + CoA + H2O = hydrogencarbonate + acetyl-CoA + NADH + H(+). It catalyses the reaction 2-methyl-3-oxopropanoate + NAD(+) + CoA + H2O = propanoyl-CoA + hydrogencarbonate + NADH + H(+). The protein operates within polyol metabolism; myo-inositol degradation into acetyl-CoA; acetyl-CoA from myo-inositol: step 7/7. Its function is as follows. Catalyzes the oxidation of malonate semialdehyde (MSA) and methylmalonate semialdehyde (MMSA) into acetyl-CoA and propanoyl-CoA, respectively. Is involved in a myo-inositol catabolic pathway. Bicarbonate, and not CO2, is the end-product of the enzymatic reaction. This is Malonate-semialdehyde dehydrogenase 1 from Geobacillus thermodenitrificans (strain NG80-2).